Here is a 372-residue protein sequence, read N- to C-terminus: N-methyl-L-tryptophan oxidase (372 aa).

4 to 34 contacts FAD; the sequence is DLIIIGSGSVGAAAGYYATRAGLNVLMTDAH. Cys308 carries the S-8alpha-FAD cysteine modification.

It belongs to the MSOX/MTOX family. MTOX subfamily. In terms of assembly, monomer. FAD serves as cofactor.

It carries out the reaction N(alpha)-methyl-L-tryptophan + O2 + H2O = L-tryptophan + formaldehyde + H2O2. Its function is as follows. Catalyzes the oxidative demethylation of N-methyl-L-tryptophan. This chain is N-methyl-L-tryptophan oxidase, found in Shigella flexneri serotype 5b (strain 8401).